The sequence spans 878 residues: Alanine--tRNA ligase (878 aa).

Zn(2+) is bound by residues H567, H571, C669, and H673.

The protein belongs to the class-II aminoacyl-tRNA synthetase family. Requires Zn(2+) as cofactor.

The protein localises to the cytoplasm. The catalysed reaction is tRNA(Ala) + L-alanine + ATP = L-alanyl-tRNA(Ala) + AMP + diphosphate. Functionally, catalyzes the attachment of alanine to tRNA(Ala) in a two-step reaction: alanine is first activated by ATP to form Ala-AMP and then transferred to the acceptor end of tRNA(Ala). Also edits incorrectly charged Ser-tRNA(Ala) and Gly-tRNA(Ala) via its editing domain. The protein is Alanine--tRNA ligase of Rickettsia akari (strain Hartford).